The sequence spans 374 residues: LIM domain-binding protein 1-A (374 aa).

Disordered regions lie at residues 1 to 24, 249 to 297, and 322 to 374; these read MLDRDVGPTPMYPPSYMEPGIGRH, PPAE…ALSS, and TRLE…QSSQ. Positions 267–297 are enriched in low complexity; the sequence is SGGSTMSSGGGNNNNSNSKKKSPASSFALSS. Positions 299-338 constitute an LIM interaction domain (LID) domain; that stretch reads DVMVVGEPTLMGGEFGDEDERLITRLENTQFDAANGIDDE. Polar residues predominate over residues 341–374; it reads FNSSPTMGTNSPWNSKAPSSQQGKNDNPSSQSSQ.

The protein belongs to the LDB family. As to expression, expressed ubiquitously in the embryo and adult.

Its subcellular location is the nucleus. Its function is as follows. Binds to the LIM domain of a wide variety of LIM domain-containing transcription factors. This is LIM domain-binding protein 1-A (ldb1a) from Danio rerio (Zebrafish).